A 176-amino-acid chain; its full sequence is N-alpha-acetyltransferase 30 (176 aa).

In terms of domain architecture, N-acetyltransferase spans I3–T159.

The protein belongs to the acetyltransferase family. MAK3 subfamily. In terms of assembly, component of the N-terminal acetyltransferase C (NatC) complex, which is composed of MAK3, MAK10 and MAK31.

The protein resides in the cytoplasm. It is found in the nucleus. The catalysed reaction is N-terminal L-methionyl-L-leucyl-[protein] + acetyl-CoA = N-terminal N(alpha)-acetyl-L-methionyl-L-leucyl-[protein] + CoA + H(+). It carries out the reaction N-terminal L-methionyl-L-isoleucyl-[protein] + acetyl-CoA = N-terminal N(alpha)-acetyl-L-methionyl-L-isoleucyl-[protein] + CoA + H(+). It catalyses the reaction N-terminal L-methionyl-L-phenylalanyl-[protein] + acetyl-CoA = N-terminal N(alpha)-acetyl-L-methionyl-L-phenylalanyl-[protein] + CoA + H(+). The enzyme catalyses N-terminal L-methionyl-L-tryptophyl-[protein] + acetyl-CoA = N-terminal N(alpha)-acetyl-L-methionyl-L-tryptophyl-[protein] + CoA + H(+). The catalysed reaction is N-terminal L-methionyl-L-tyrosyl-[protein] + acetyl-CoA = N-terminal N(alpha)-acetyl-L-methionyl-L-tyrosyl-[protein] + CoA + H(+). Its function is as follows. Catalytic component of the NatC N-terminal acetyltransferase, which catalyzes acetylation of the N-terminus Met of L-A virus GAG protein and possibly GRH1. The chain is N-alpha-acetyltransferase 30 (MAK3) from Saccharomyces cerevisiae (strain ATCC 204508 / S288c) (Baker's yeast).